The chain runs to 329 residues: GTP 3',8-cyclase (329 aa).

The Radical SAM core domain occupies 1 to 229 (MNQVDYLRIS…EGYVRGNGPA (229 aa)). Position 8 (R8) interacts with GTP. The [4Fe-4S] cluster site is built by C15 and C19. An S-adenosyl-L-methionine-binding site is contributed by Y21. Position 22 (C22) interacts with [4Fe-4S] cluster. R60 contributes to the GTP binding site. An S-adenosyl-L-methionine-binding site is contributed by G64. Position 91 (T91) interacts with GTP. Residue S115 participates in S-adenosyl-L-methionine binding. K155 serves as a coordination point for GTP. An S-adenosyl-L-methionine-binding site is contributed by M189. [4Fe-4S] cluster contacts are provided by C252 and C255. 257-259 (RVR) is a GTP binding site. C269 contributes to the [4Fe-4S] cluster binding site.

It belongs to the radical SAM superfamily. MoaA family. As to quaternary structure, monomer and homodimer. The cofactor is [4Fe-4S] cluster.

It catalyses the reaction GTP + AH2 + S-adenosyl-L-methionine = (8S)-3',8-cyclo-7,8-dihydroguanosine 5'-triphosphate + 5'-deoxyadenosine + L-methionine + A + H(+). It participates in cofactor biosynthesis; molybdopterin biosynthesis. Catalyzes the cyclization of GTP to (8S)-3',8-cyclo-7,8-dihydroguanosine 5'-triphosphate. This is GTP 3',8-cyclase from Cyanothece sp. (strain PCC 7425 / ATCC 29141).